A 642-amino-acid chain; its full sequence is MPAITLPDGSVRHYDAPVTGTTIAADIGPGLARAALAMKVDGRMMDLSRAIAADAQVVFVTRKDEAALEMIRHDAAHVLAEAVQELFPGTQVTIGPSIENGFYYDFARNEPFTPEDLPAIEAKMREIIARNAPFEREVWDRQDAIRFFQDKGEKYKAQLIQDLPDTETITVYRQGEWLDLCRGPHMRSTGDIGPAFRLMKVAGAYWRGDHRNAMLSRIYGTAWRDQKELDAYLHQLEEAERRDHRRLGKEMDLFHIQEEAVGSIFWHKKGWRLYRALENYMRRRQIEAGYEEVRTPQLVDRSLWEDSGHWDKYREHMFIATVEDEEKTLALKPMNCPCHVQIFRHGLRSYKELPLRMAEFGACHRYEPSGALHGIMRVRSFTQDDAHIFCMPEQIAKETADFVAMLASVYRDLGFDSFRVKFADRPESRAGKDEDWDRAEHELREACRLAGVEYELNPGEGAFYGPKLEFVLRDAIGRDWQCGTLQVDYVLPERLNAEYVAEDGARRRPVMLHRAILGSFERFIGILIEQYAGRFPLWLAPVPVVVAPIVSDANAYAMEVVTALKRAGVTWAEADLRNEKINAKIREHSLAHVPVILVVGRREAEQRQVALRRLGSQEQQVMALDEAISALATEATPPDLRQ.

A TGS domain is found at 1–61 (MPAITLPDGS…AADAQVVFVT (61 aa)). The catalytic stretch occupies residues 243-536 (DHRRLGKEMD…LIEQYAGRFP (294 aa)). Residues cysteine 336, histidine 387, and histidine 513 each coordinate Zn(2+).

The protein belongs to the class-II aminoacyl-tRNA synthetase family. Homodimer. Zn(2+) serves as cofactor.

The protein localises to the cytoplasm. It catalyses the reaction tRNA(Thr) + L-threonine + ATP = L-threonyl-tRNA(Thr) + AMP + diphosphate + H(+). Functionally, catalyzes the attachment of threonine to tRNA(Thr) in a two-step reaction: L-threonine is first activated by ATP to form Thr-AMP and then transferred to the acceptor end of tRNA(Thr). Also edits incorrectly charged L-seryl-tRNA(Thr). The sequence is that of Threonine--tRNA ligase from Granulibacter bethesdensis (strain ATCC BAA-1260 / CGDNIH1).